Here is a 354-residue protein sequence, read N- to C-terminus: 5,10-methenyltetrahydromethanopterin hydrogenase (354 aa).

Belongs to the HMD family.

It carries out the reaction 5,10-methenyl-5,6,7,8-tetrahydromethanopterin + H2 = 5,10-methylenetetrahydromethanopterin + H(+). It participates in one-carbon metabolism; methanogenesis from CO(2); 5,10-methylene-5,6,7,8-tetrahydromethanopterin from 5,10-methenyl-5,6,7,8-tetrahydromethanopterin (hydrogen route): step 1/1. Functionally, catalyzes the reversible reduction of methenyl-H(4)MPT(+) to methylene-H(4)MPT. The polypeptide is 5,10-methenyltetrahydromethanopterin hydrogenase (Methanococcus maripaludis (strain C5 / ATCC BAA-1333)).